The following is a 695-amino-acid chain: Elongation factor G 1 (695 aa).

The tr-type G domain occupies 6–284 (KKVRNIGISA…VTRYLPCPAD (279 aa)). GTP-binding positions include 15 to 22 (AHIDSGKT), 82 to 86 (DTPGH), and 136 to 139 (NKCD).

This sequence belongs to the TRAFAC class translation factor GTPase superfamily. Classic translation factor GTPase family. EF-G/EF-2 subfamily.

The protein resides in the cytoplasm. Its function is as follows. Catalyzes the GTP-dependent ribosomal translocation step during translation elongation. During this step, the ribosome changes from the pre-translocational (PRE) to the post-translocational (POST) state as the newly formed A-site-bound peptidyl-tRNA and P-site-bound deacylated tRNA move to the P and E sites, respectively. Catalyzes the coordinated movement of the two tRNA molecules, the mRNA and conformational changes in the ribosome. This chain is Elongation factor G 1, found in Syntrophus aciditrophicus (strain SB).